The primary structure comprises 118 residues: Small ribosomal subunit protein uS13 (118 aa).

The tract at residues 95–118 is disordered; it reads LPLRGQRTRTNARTRKGPRKAIKK.

It belongs to the universal ribosomal protein uS13 family. In terms of assembly, part of the 30S ribosomal subunit. Forms a loose heterodimer with protein S19. Forms two bridges to the 50S subunit in the 70S ribosome.

Located at the top of the head of the 30S subunit, it contacts several helices of the 16S rRNA. In the 70S ribosome it contacts the 23S rRNA (bridge B1a) and protein L5 of the 50S subunit (bridge B1b), connecting the 2 subunits; these bridges are implicated in subunit movement. Contacts the tRNAs in the A and P-sites. The polypeptide is Small ribosomal subunit protein uS13 (Xylella fastidiosa (strain 9a5c)).